The chain runs to 418 residues: MDKFKIDGRCTLNGEVTISGAKNAALPILFATLLCDEEIHLSNVPRLKDVGTTIKLLEMLGATTKVNGNVTVLTGAVNNHVAPYELVKTMRASILALGPLAARFGAADVSLPGGCAIGARPVNLHVHGLELMGAKIAIEDGYIKARVDGRLKGAHILMDMVSVTGTENLMMAATLADGRTVIENAAREPEVVDLANFLNALGAKIQGAGTDTLTIDGVERLHGGSYSVQPDRIETGTFLVGAAVTGGKITCRKTDPTLLEAVLVKLEEAGALIEKGEDWITLDMTGRTLKPVTIKTAPYPAFPTDMQAQFTVLNAVAKGTGMVTETIFENRFMHVPELVRMGADIELQGNVAICRDTQQLKGAQVMATDLRASASLVLAGFVAEGSTIVDRIYHIDRGYEDIEHKLQGLGGRIERIKG.

Residue 22–23 coordinates phosphoenolpyruvate; that stretch reads KN. Arg91 is a UDP-N-acetyl-alpha-D-glucosamine binding site. The active-site Proton donor is the Cys115. At Cys115 the chain carries 2-(S-cysteinyl)pyruvic acid O-phosphothioketal. The UDP-N-acetyl-alpha-D-glucosamine site is built by Asp305 and Ile327.

Belongs to the EPSP synthase family. MurA subfamily.

The protein resides in the cytoplasm. The enzyme catalyses phosphoenolpyruvate + UDP-N-acetyl-alpha-D-glucosamine = UDP-N-acetyl-3-O-(1-carboxyvinyl)-alpha-D-glucosamine + phosphate. Its pathway is cell wall biogenesis; peptidoglycan biosynthesis. Functionally, cell wall formation. Adds enolpyruvyl to UDP-N-acetylglucosamine. This is UDP-N-acetylglucosamine 1-carboxyvinyltransferase from Aeromonas hydrophila subsp. hydrophila (strain ATCC 7966 / DSM 30187 / BCRC 13018 / CCUG 14551 / JCM 1027 / KCTC 2358 / NCIMB 9240 / NCTC 8049).